Consider the following 354-residue polypeptide: Isopentenyl-diphosphate delta-isomerase (354 aa).

Position 11–12 (11–12) interacts with substrate; the sequence is KK. Residues S67, 68–70, S98, and N126 each bind FMN; that span reads SMT. Residue 98 to 100 coordinates substrate; that stretch reads SFK. Q160 is a substrate binding site. E161 provides a ligand contact to Mg(2+). FMN is bound by residues K192, T222, and 289–290; that span reads AA.

It belongs to the IPP isomerase type 2 family. In terms of assembly, homooctamer. Dimer of tetramers. It depends on FMN as a cofactor. NADPH serves as cofactor. The cofactor is Mg(2+).

It localises to the cytoplasm. It carries out the reaction isopentenyl diphosphate = dimethylallyl diphosphate. Functionally, involved in the biosynthesis of isoprenoids. Catalyzes the 1,3-allylic rearrangement of the homoallylic substrate isopentenyl (IPP) to its allylic isomer, dimethylallyl diphosphate (DMAPP). The protein is Isopentenyl-diphosphate delta-isomerase of Borreliella afzelii (strain PKo) (Borrelia afzelii).